The chain runs to 236 residues: C-&gt;U-editing enzyme APOBEC-1 (236 aa).

The 125-residue stretch at K10–L134 folds into the CMP/dCMP-type deaminase domain. Residue H61 participates in Zn(2+) binding. The active-site Proton donor is E63. Zn(2+) is bound by residues C93 and C96.

It belongs to the cytidine and deoxycytidylate deaminase family. In terms of assembly, homodimer. Interacts with A1CF; form an mRNA editing complex. Interacts with RBM47; form an mRNA editing complex. Found in a complex with CELF2/CUGBP2 and A1CF. Interacts with HNRPAB. Interacts with SYNCRIP. It depends on Zn(2+) as a cofactor. Expressed exclusively in the intestine.

It localises to the cytoplasm. The protein resides in the nucleus. It carries out the reaction a cytidine in mRNA + H2O + H(+) = a uridine in mRNA + NH4(+). The catalysed reaction is cytidine(6666) in apoB mRNA + H2O + H(+) = uridine(6666) in apoB mRNA + NH4(+). In terms of biological role, cytidine deaminase catalyzing the cytidine to uridine postranscriptional editing of a variety of mRNAs. Form complexes with cofactors that confer differential editing activity and selectivity. Responsible for the postranscriptional editing of a CAA codon for Gln to a UAA codon for stop in the apolipoprotein B mRNA. Also involved in CGA (Arg) to UGA (Stop) editing in the NF1 mRNA. May also play a role in the epigenetic regulation of gene expression by participating in DNA demethylation. This Oryctolagus cuniculus (Rabbit) protein is C-&gt;U-editing enzyme APOBEC-1.